The following is a 369-amino-acid chain: Peptide chain release factor 2 (369 aa).

Gln250 is subject to N5-methylglutamine.

This sequence belongs to the prokaryotic/mitochondrial release factor family. Methylated by PrmC. Methylation increases the termination efficiency of RF2.

The protein localises to the cytoplasm. In terms of biological role, peptide chain release factor 2 directs the termination of translation in response to the peptide chain termination codons UGA and UAA. The sequence is that of Peptide chain release factor 2 (prfB) from Rickettsia typhi (strain ATCC VR-144 / Wilmington).